The sequence spans 138 residues: Large ribosomal subunit protein uL29 (138 aa).

The tract at residues 1–79 (MAKSKMLDLR…TNKVIKADYN (79 aa)) is large ribosomal subunit protein uL29. Positions 80–138 (KAVEEAEKAGKEVRAKQRKFLEEQYGQQSQTKVNEADIQKAMQAAEQETVEPDTKGETK) are unknown. The interval 103-138 (QYGQQSQTKVNEADIQKAMQAAEQETVEPDTKGETK) is disordered.

Belongs to the universal ribosomal protein uL29 family.

In Mycoplasma capricolum subsp. capricolum (strain California kid / ATCC 27343 / NCTC 10154), this protein is Large ribosomal subunit protein uL29.